We begin with the raw amino-acid sequence, 108 residues long: ATPase inhibitor, mitochondrial (108 aa).

The transit peptide at M1–F25 directs the protein to the mitochondrion. The interval F25–G48 is disordered. The tract at residues S26–Q52 is N-terminal inhibitory region. Residues A69–D108 are a coiled coil. The antiparallel alpha-helical coiled coil region stretch occupies residues H74–D106. An N6-succinyllysine modification is found at K103.

It belongs to the ATPase inhibitor family. As to quaternary structure, homodimer; represents the active form and is present at a pH value below 6.5. Homotetramer; represents the inactive form and is present at a pH value above 7.0.

The protein resides in the mitochondrion. Endogenous F(1)F(o)-ATPase inhibitor limiting ATP depletion when the mitochondrial membrane potential falls below a threshold and the F(1)F(o)-ATP synthase starts hydrolyzing ATP to pump protons out of the mitochondrial matrix. Required to avoid the consumption of cellular ATP when the F(1)F(o)-ATP synthase enzyme acts as an ATP hydrolase. Indirectly acts as a regulator of heme synthesis in erythroid tissues: regulates heme synthesis by modulating the mitochondrial pH and redox potential, allowing FECH to efficiently catalyze the incorporation of iron into protoporphyrin IX to produce heme. This chain is ATPase inhibitor, mitochondrial, found in Sus scrofa (Pig).